The chain runs to 312 residues: Malate dehydrogenase (312 aa).

NAD(+) is bound by residues 7-13 and aspartate 34; that span reads GAAGGIG. Arginine 81 and arginine 87 together coordinate substrate. NAD(+) contacts are provided by residues asparagine 94 and 117-119; that span reads ITN. Substrate is bound by residues asparagine 119 and arginine 153. Histidine 177 serves as the catalytic Proton acceptor. Methionine 227 is a binding site for NAD(+).

It belongs to the LDH/MDH superfamily. MDH type 1 family. In terms of assembly, homodimer.

The enzyme catalyses (S)-malate + NAD(+) = oxaloacetate + NADH + H(+). Catalyzes the reversible oxidation of malate to oxaloacetate. The protein is Malate dehydrogenase of Shigella flexneri serotype 5b (strain 8401).